A 301-amino-acid chain; its full sequence is Ribonuclease HIII (301 aa).

The RNase H type-2 domain maps to 88 to 301 (WSVLGSDEVG…TQKARQLARQ (214 aa)). Residues aspartate 94, glutamate 95, and aspartate 197 each coordinate a divalent metal cation.

It belongs to the RNase HII family. RnhC subfamily. Requires Mn(2+) as cofactor. Mg(2+) serves as cofactor.

The protein localises to the cytoplasm. It catalyses the reaction Endonucleolytic cleavage to 5'-phosphomonoester.. Its function is as follows. Endonuclease that specifically degrades the RNA of RNA-DNA hybrids. The chain is Ribonuclease HIII from Limosilactobacillus fermentum (strain NBRC 3956 / LMG 18251) (Lactobacillus fermentum).